Reading from the N-terminus, the 387-residue chain is F-box only protein 4 (387 aa).

Residues serine 12 and serine 48 each carry the phosphoserine modification. The 47-residue stretch at 56–102 (ASTLTRLPIDVQLYILSFLSPHDLCQLGSTNHYWNETVRDPILWRYF) folds into the F-box domain.

In terms of assembly, homodimer. Part of the SCF (SKP1-CUL1-F-box) E3 ubiquitin-protein ligase complex SCF(FBXO4) formed of CUL1, SKP1, RBX1 and FBXO4. Interacts with TERF1; this interaction is prevented in the presence of GNL3L. Identified in a complex with CRYAB and CCND1. Phosphorylation at Ser-12 varies during the cell cycle. It is low in resting cells and high in the S phase and the G2/M phase of the cell cycle. Phosphorylation is decreased during late G1 phase. Phosphorylation at Ser-12 promotes homodimerization and is necessary for optimal ubiquitin ligase activity towards CCND1.

The protein localises to the cytoplasm. It functions in the pathway protein modification; protein ubiquitination. In terms of biological role, substrate recognition component of a SCF (SKP1-CUL1-F-box protein) E3 ubiquitin-protein ligase complex that mediates the ubiquitination and subsequent proteasomal degradation of target proteins. Promotes ubiquitination of cyclin-D1 (CCND1) and its subsequent proteasomal degradation. However, it does not act as a major regulator of CCND1 stability during the G1/S transition. Recognizes TERF1 and promotes its ubiquitination together with UBE2D1. Promotes ubiquitination of FXR1 following phosphorylation of FXR1 by GSK3B, leading to FXR1 degradation by the proteasome. This is F-box only protein 4 (FBXO4) from Homo sapiens (Human).